The sequence spans 268 residues: tRNA (guanine-N(7)-)-methyltransferase (268 aa).

Positions 1-21 (MMAGAEAPQPQKRYYRQRAHS) are disordered. Ser-21 carries the post-translational modification Phosphoserine. S-adenosyl-L-methionine-binding residues include Gly-78, Glu-101, Arg-103, Asn-134, Ala-135, and Leu-154. Asp-157 is a catalytic residue. Positions 158–166 (PHFKRTKHK) are alphaC helix. Residues Thr-232 and Glu-234 each coordinate S-adenosyl-L-methionine. Residues 232 to 240 (TEEGKKVLR) form an alpha6 helix region.

The protein belongs to the class I-like SAM-binding methyltransferase superfamily. TrmB family. Catalytic component of the METTL1-WDR4 complex, composed of METTL1 and WDR4. Post-translationally, phosphorylation at Ser-21 by PKB/AKT1 inactivates its methyltransferase activity via a steric interference mechanism in the active site that locally disrupts the catalytic center. Phosphorylation at Ser-21 does not affect the interaction with WDR4.

The protein resides in the nucleus. The catalysed reaction is guanosine(46) in tRNA + S-adenosyl-L-methionine = N(7)-methylguanosine(46) in tRNA + S-adenosyl-L-homocysteine. It catalyses the reaction a guanosine in mRNA + S-adenosyl-L-methionine = an N(7)-methylguanosine in mRNA + S-adenosyl-L-homocysteine. It carries out the reaction a guanosine in miRNA + S-adenosyl-L-methionine = an N(7)-methylguanosine in miRNA + S-adenosyl-L-homocysteine. It functions in the pathway tRNA modification; N(7)-methylguanine-tRNA biosynthesis. Its function is as follows. Catalytic component of METTL1-WDR4 methyltransferase complex that mediates the formation of N(7)-methylguanine in a subset of RNA species, such as tRNAs, mRNAs and microRNAs (miRNAs). Catalyzes the formation of N(7)-methylguanine at position 46 (m7G46) in a large subset of tRNAs that contain the 5'-RAGGU-3' motif within the variable loop. M7G46 interacts with C13-G22 in the D-loop to stabilize tRNA tertiary structure and protect tRNAs from decay. Also acts as a methyltransferase for a subset of internal N(7)-methylguanine in mRNAs. Internal N(7)-methylguanine methylation of mRNAs in response to stress promotes their relocalization to stress granules, thereby suppressing their translation. Also methylates a specific subset of miRNAs, such as let-7. N(7)-methylguanine methylation of let-7 miRNA promotes let-7 miRNA processing by disrupting an inhibitory secondary structure within the primary miRNA transcript (pri-miRNA). Acts as a regulator of embryonic stem cell self-renewal and differentiation. The protein is tRNA (guanine-N(7)-)-methyltransferase of Mus musculus (Mouse).